The chain runs to 471 residues: FAD-dependent monooxygenase andE (471 aa).

Glutamate 35, glycine 49, and arginine 108 together coordinate FAD. Residue tyrosine 216 is part of the active site. The FAD site is built by aspartate 308 and alanine 321. Transmembrane regions (helical) follow at residues 403 to 423 and 443 to 463; these read LANI…LPFP and TPFA…LLGL.

The protein belongs to the paxM FAD-dependent monooxygenase family. Requires FAD as cofactor.

The protein resides in the membrane. It participates in secondary metabolite biosynthesis; terpenoid biosynthesis. FAD-dependent monooxygenase; part of the gene cluster that mediates the biosynthesis of anditomin, a fungal meroterpenoid. The first step of the pathway is the synthesis of 3,5-dimethylorsellinic acid (DMOA) by the polyketide synthase andM. DMOA is then converted to the phthalide compound 5,7-dihydroxy-4,6-dimethylphthalide (DHDMP) by the cytochrome P450 monooxygenase andK, which is further prenylated by the prenyltransferase andD to yield farnesyl-DHDMP. Further epoxidation by the FAD-dependent monooxygenase andE leads to epoxyfarnesyl-DHDMP. The next step involves the terpene cyclase andB that converts epoxyfarnesyl-DHDMP into preandiloid A through opening of the epoxide ring followed by the cyclization of the farnesyl moiety. Preandiloid A is in turn oxidized at the C-3 hydroxyl group to yield preandiloid B by the dehydrogenase andC. The dioxygenase andA is solely responsible for the dehydrogenation of preandiloid B leading to the enone preandiloid C, as well as for the intriguing structural rearrangement to generate the bicyclo[2.2.2]octane core, transforming preandiloid C into andiconin. FAD-binding monooxygenase andJ then produces andilesin D which is reduced by dehydrogenase andI to yield andilesin A. Action of acetyltransferase andG followed by a spontaneous acetate elimination leads then to andilesin B, which is in turn substrate of the short chain dehydrogenase andH to yield andilesin C. Finally, the dioxygenase andF catalyzes the transformation of andilesin C to anditomin. In Emericella variicolor (Aspergillus stellatus), this protein is FAD-dependent monooxygenase andE.